Consider the following 296-residue polypeptide: Protoheme IX farnesyltransferase (296 aa).

At 1–9 the chain is on the cytoplasmic side; sequence MMFKQYLQV. Residues 10 to 28 form a helical membrane-spanning segment; sequence TKPGIIFGNLISVIGGFLL. Residues 29-37 are Periplasmic-facing; sequence ASKGSIDYP. The chain crosses the membrane as a helical span at residues 38–56; sequence LFIYTLVGVSLVVASGCVF. The Cytoplasmic portion of the chain corresponds to 57–78; sequence NNYIDRDIDRKMERTKNRVLVK. The helical transmembrane segment at 79 to 97 threads the bilayer; the sequence is GLISPGVSLVYATLLGIAG. The Periplasmic segment spans residues 98–107; that stretch reads FMLLWFGANP. A helical membrane pass occupies residues 108-126; sequence LACWLGVMGFVVYVGVYSL. Residues 127–197 are Cytoplasmic-facing; it reads YMKRHSVYGT…YQAANIPVLP (71 aa). The chain crosses the membrane as a helical span at residues 198–216; sequence VIKGISVAKNHITLYIIAF. At 217-228 the chain is on the periplasmic side; the sequence is AVATLMLTLGGY. The helical transmembrane segment at 229–247 threads the bilayer; sequence AGYKYLVVAAAVSVWWLGM. Topologically, residues 248–268 are cytoplasmic; sequence ALRGYKVEDDKVWARKLFGFS. Residues 269–287 traverse the membrane as a helical segment; sequence IIAITALSIMMSVDFMVPN. The Periplasmic segment spans residues 288 to 296; it reads SQNLLTYVW.

This sequence belongs to the UbiA prenyltransferase family. Protoheme IX farnesyltransferase subfamily.

The protein localises to the cell inner membrane. It carries out the reaction heme b + (2E,6E)-farnesyl diphosphate + H2O = Fe(II)-heme o + diphosphate. It participates in porphyrin-containing compound metabolism; heme O biosynthesis; heme O from protoheme: step 1/1. In terms of biological role, converts heme B (protoheme IX) to heme O by substitution of the vinyl group on carbon 2 of heme B porphyrin ring with a hydroxyethyl farnesyl side group. In Salmonella typhi, this protein is Protoheme IX farnesyltransferase.